The primary structure comprises 582 residues: MMNDKDLSTWQTFRRLWPTISPYKAGLIVAAIALILNAASDTFMLSLLKPLLDDGFGNSNSSILKWMPLAVIGLMVVRGVTGFVSSYCISWVSGKVVMHIRRRLFSHMMGMPVSFFDQQSTGTLLSRITYDSEQVAASSSSALVTVVREGASIIGLFIMMFYYSWQLSLILIVIAPIVSISIRLVSKRFRNISKNMQNTMGEVTTSAEQMLKGHKEVLIFGGQKVETERFDAVSNRMRQQGMKLVSASSISDPIIQLIASFALALVLYAASFPSVMETLTAGTITVVFSAMIALMRPLKSLTNVNTQFQRGMAACQTLFSILDMEQEKDEGKLEVERAKGDIEFRHVTFYYPGKDTPALNDINIHLEAGKTVALVGRSGSGKSTIANLLTRFYDVSEGSILLDGHDLRDYRLGALRNQVALVSQNVHLFNDTVANNIAYARNEQYSRAEIEEAARMAYAMDFINKMEHGLDTVIGENGIMLSGGQRQRIAIARALLRNCPILILDEATSALDTESERAIQAALDELQKNRTSLVIAHRLSTIEKADEIVVIEDGRIVERGVHAELLVQQGVYAQLNRMQFGQ.

Helical transmembrane passes span 25–45 (AGLI…TFML), 69–89 (LAVI…SYCI), 137–159 (ASSS…LFIM), 253–273 (PIIQ…ASFP), and 275–295 (VMET…IALM). The ABC transmembrane type-1 domain maps to 28 to 310 (IVAAIALILN…LTNVNTQFQR (283 aa)). An ABC transporter domain is found at 342–578 (IEFRHVTFYY…QGVYAQLNRM (237 aa)). Residue 376 to 383 (GRSGSGKS) participates in ATP binding.

The protein belongs to the ABC transporter superfamily. Lipid exporter (TC 3.A.1.106) family. As to quaternary structure, homodimer.

The protein resides in the cell inner membrane. The enzyme catalyses ATP + H2O + lipid A-core oligosaccharideSide 1 = ADP + phosphate + lipid A-core oligosaccharideSide 2.. Functionally, involved in lipopolysaccharide (LPS) biosynthesis. Translocates lipid A-core from the inner to the outer leaflet of the inner membrane. Transmembrane domains (TMD) form a pore in the inner membrane and the ATP-binding domain (NBD) is responsible for energy generation. This is ATP-dependent lipid A-core flippase from Yersinia pestis bv. Antiqua (strain Antiqua).